Consider the following 129-residue polypeptide: NADH-quinone oxidoreductase subunit 15 (129 aa).

It belongs to the complex I Nqo15 family. In terms of assembly, NDH-1 is composed of 15 different subunits, Nqo1 to Nqo15. The complex has a L-shaped structure, with the hydrophobic arm (subunits Nqo7, Nqo8 and Nqo10 to Nqo14) embedded in the membrane and the hydrophilic peripheral arm (subunits Nqo1 to Nqo6, Nqo9 and Nqo15) protruding into the bacterial cytoplasm. The hydrophilic domain contains all the redox centers. Nqo15 is bound to the side of the complex near the N-terminus of Nqo3, where it interacts with subunits Nqo3, Nqo2, Nqo1, Nqo9 and Nqo4.

The protein resides in the cell membrane. The catalysed reaction is a quinone + NADH + 5 H(+)(in) = a quinol + NAD(+) + 4 H(+)(out). NDH-1 shuttles electrons from NADH, via FMN and iron-sulfur (Fe-S) centers, to quinones in the respiratory chain. The immediate electron acceptor for the enzyme in this species is menaquinone. Couples the redox reaction to proton translocation (for every two electrons transferred, four hydrogen ions are translocated across the cytoplasmic membrane), and thus conserves the redox energy in a proton gradient required for the synthesis of ATP. The Nqo15 subunit has probably a role in complex stabilization, and may be also involved in the storage of iron for iron-sulfur cluster regeneration in the complex. This is NADH-quinone oxidoreductase subunit 15 (nqo15) from Thermus thermophilus (strain ATCC 27634 / DSM 579 / HB8).